A 170-amino-acid polypeptide reads, in one-letter code: MGNETSLPMEMCSNFDADEIRRLGKRFRKLDLDNSGALSVDEFMSLPELQQNPLVQRVIDIFDADGNGEVDFKEFIQGVSQFSVKGDKLSKLRFAFRIYDMDNDGYISNGELFQVLKMMVGNNLKDTQLQQIVDKTIGFADKDEDGKISFDEFCSVVGNTDIHKKMVVDV.

EF-hand domains lie at 18-46 (DEIRRLGKRFRKLDLDNSGALSVDEFMSL), 50-85 (QQNPLVQRVIDIFDADGNGEVDFKEFIQGVSQFSVK), 87-122 (DKLSKLRFAFRIYDMDNDGYISNGELFQVLKMMVGN), and 128-163 (QLQQIVDKTIGFADKDEDGKISFDEFCSVVGNTDIH). Residues aspartate 31, aspartate 33, serine 35, glutamate 42, aspartate 63, aspartate 65, asparagine 67, glutamate 69, glutamate 74, aspartate 100, aspartate 102, aspartate 104, tyrosine 106, glutamate 111, aspartate 141, aspartate 143, aspartate 145, lysine 147, and glutamate 152 each contribute to the Ca(2+) site. Serine 35 is subject to Phosphoserine.

The protein belongs to the calcineurin regulatory subunit family. Composed of a catalytic subunit (A) and a regulatory subunit (B). Interacts with sra.

In terms of biological role, calcineurin is a calcium-binding and calmodulin-binding protein found in all cells from yeast to mammals, and a calcium-dependent, calmodulin-stimulated protein phosphatase. This chain is Calcineurin subunit B type 2 (CanB2), found in Drosophila melanogaster (Fruit fly).